The primary structure comprises 173 residues: Adenine phosphoribosyltransferase (173 aa).

This sequence belongs to the purine/pyrimidine phosphoribosyltransferase family. Homodimer.

The protein localises to the cytoplasm. The catalysed reaction is AMP + diphosphate = 5-phospho-alpha-D-ribose 1-diphosphate + adenine. The protein operates within purine metabolism; AMP biosynthesis via salvage pathway; AMP from adenine: step 1/1. In terms of biological role, catalyzes a salvage reaction resulting in the formation of AMP, that is energically less costly than de novo synthesis. This is Adenine phosphoribosyltransferase from Thermotoga maritima (strain ATCC 43589 / DSM 3109 / JCM 10099 / NBRC 100826 / MSB8).